A 345-amino-acid chain; its full sequence is D-apiose dehydrogenase (345 aa).

An NAD(+)-binding site is contributed by 15–16; it reads FF. Residues W24, K25, V27, and A30 each contribute to the Mg(2+) site. Residues D37, S79, 97 to 98, N126, and 165 to 167 contribute to the NAD(+) site; these read QK and QPY. Residue K98 participates in substrate binding. Residues Q165, D178, H182, and Y232 each coordinate substrate.

Belongs to the Gfo/Idh/MocA family.

The catalysed reaction is D-apiofuranose + NAD(+) = D-apionolactone + NADH + H(+). The protein operates within carbohydrate metabolism. Involved in catabolism of D-apiose. Catalyzes oxidation of D-apiose to D-apionolactone. This Rhizobium rhizogenes (strain K84 / ATCC BAA-868) (Agrobacterium radiobacter) protein is D-apiose dehydrogenase.